The chain runs to 475 residues: Lipoprotein lipase (475 aa).

Positions 1-27 (MESKALLVLTLAVWLQSLTASRGGVAA) are cleaved as a signal peptide. Residues 32-53 (RDFIDIESKFALRTPEDTAEDT) form an interaction with GPIHBP1 region. An intrachain disulfide couples C54 to C67. N-linked (GlcNAc...) asparagine glycosylation is present at N70. The residue at position 121 (Y121) is a 3'-nitrotyrosine. S159 acts as the Nucleophile in catalysis. Catalysis depends on D183, which acts as the Charge relay system. Position 191 is a 3'-nitrotyrosine (Y191). The Ca(2+) site is built by A194, R197, S199, and D202. Cysteines 243 and 266 form a disulfide. The segment at 243–266 (CNIGEAIRVIAERGLGDVDQLVKC) is essential for determining substrate specificity. H268 functions as the Charge relay system in the catalytic mechanism. Intrachain disulfides connect C291–C310 and C302–C305. In terms of domain architecture, PLAT spans 341 to 464 (FHYQVKIHFS…KGKAPAVFVK (124 aa)). Y343 bears the 3'-nitrotyrosine mark. N-linked (GlcNAc...) asparagine glycosylation is present at N386. The segment at 417 to 421 (WSDWW) is important for interaction with lipoprotein particles. The interval 430 to 434 (KIRVK) is important for heparin binding. The interval 443–467 (IFCSREKVSHLQKGKAPAVFVKCHD) is interaction with GPIHBP1. C445 and C465 form a disulfide bridge.

It belongs to the AB hydrolase superfamily. Lipase family. As to quaternary structure, homodimer. Interacts with GPIHBP1 with 1:1 stoichiometry. Interacts with APOC2; the interaction activates LPL activity in the presence of lipids. Interaction with heparan sulfate proteoglycans is required to protect LPL against loss of activity. Associates with lipoprotein particles in blood plasma. Interacts with LMF1 and SEL1L; interaction with SEL1L is required to prevent aggregation of newly synthesized LPL in the endoplasmic reticulum (ER), and for normal export of LPL from the ER to the extracellular space. Interacts with SORL1; SORL1 acts as a sorting receptor, promoting LPL localization to endosomes and later to lysosomes, leading to degradation of newly synthesized LPL. In terms of processing, tyrosine nitration after lipopolysaccharide (LPS) challenge down-regulates the lipase activity. As to expression, detected in blood plasma. Detected in milk (at protein level).

It is found in the cell membrane. It localises to the secreted. The protein resides in the extracellular space. Its subcellular location is the extracellular matrix. The enzyme catalyses a triacylglycerol + H2O = a diacylglycerol + a fatty acid + H(+). It catalyses the reaction a 1,2-diacyl-sn-glycero-3-phosphocholine + H2O = a 2-acyl-sn-glycero-3-phosphocholine + a fatty acid + H(+). The catalysed reaction is 1,2,3-tri-(9Z-octadecenoyl)-glycerol + H2O = di-(9Z)-octadecenoylglycerol + (9Z)-octadecenoate + H(+). It carries out the reaction 1,2-di-(9Z-octadecenoyl)-sn-glycero-3-phosphocholine + H2O = (9Z-octadecenoyl)-sn-glycero-3-phosphocholine + (9Z)-octadecenoate + H(+). The enzyme catalyses 1,2,3-tributanoylglycerol + H2O = dibutanoylglycerol + butanoate + H(+). It catalyses the reaction 1,2-dihexadecanoyl-sn-glycero-3-phosphocholine + H2O = hexadecanoyl-sn-glycero-3-phosphocholine + hexadecanoate + H(+). Its activity is regulated as follows. The apolipoprotein APOC2 acts as a coactivator of LPL activity. Ca(2+) binding promotes protein stability and formation of the active homodimer. Interaction with GPIHBP1 protects LPL against inactivation by ANGPTL4. Inhibited by NaCl. Functionally, key enzyme in triglyceride metabolism. Catalyzes the hydrolysis of triglycerides from circulating chylomicrons and very low density lipoproteins (VLDL), and thereby plays an important role in lipid clearance from the blood stream, lipid utilization and storage. Although it has both phospholipase and triglyceride lipase activities it is primarily a triglyceride lipase with low but detectable phospholipase activity. Mediates margination of triglyceride-rich lipoprotein particles in capillaries. Recruited to its site of action on the luminal surface of vascular endothelium by binding to GPIHBP1 and cell surface heparan sulfate proteoglycans. This chain is Lipoprotein lipase (LPL), found in Homo sapiens (Human).